We begin with the raw amino-acid sequence, 289 residues long: D-psicose 3-epimerase (289 aa).

Substrate contacts are provided by Y6 and A107. Residue E150 is the Proton donor/acceptor of the active site. E150 serves as a coordination point for Mn(2+). Substrate is bound by residues E156 and 183-186 (DTFH). 2 residues coordinate Mn(2+): D183 and H209. A substrate-binding site is contributed by R215. E244 serves as the catalytic Proton donor/acceptor. A Mn(2+)-binding site is contributed by E244.

This sequence belongs to the hyi family. In terms of assembly, homotetramer. It depends on Mn(2+) as a cofactor. Requires Co(2+) as cofactor.

It carries out the reaction D-allulose = keto-D-fructose. Its activity is regulated as follows. Inhibited by Zn(2+) and Cu(2+). Its function is as follows. Involved in the biosynthesis of D-psicose. Catalyzes the reversible epimerization of D-fructose at the C3 position to yield D-psicose. The enzyme is highly specific for D-psicose and shows very low activity with D-tagatose. The substrate specificity decreases in the following order: D-fructose, D-tagatose, D-ribulose, D-xylulose, and D-sorbose. It shows a higher level of activity for cis ketoses than for trans-ketoses. The polypeptide is D-psicose 3-epimerase (dpe) (Agrobacterium fabrum (strain C58 / ATCC 33970) (Agrobacterium tumefaciens (strain C58))).